Reading from the N-terminus, the 143-residue chain is Putative pre-16S rRNA nuclease (143 aa).

Belongs to the YqgF nuclease family.

The protein localises to the cytoplasm. Functionally, could be a nuclease involved in processing of the 5'-end of pre-16S rRNA. This is Putative pre-16S rRNA nuclease from Ralstonia pickettii (strain 12J).